Consider the following 121-residue polypeptide: Large ribosomal subunit protein bL20c (121 aa).

It belongs to the bacterial ribosomal protein bL20 family.

The protein resides in the plastid. The protein localises to the chloroplast. In terms of biological role, binds directly to 23S ribosomal RNA and is necessary for the in vitro assembly process of the 50S ribosomal subunit. It is not involved in the protein synthesizing functions of that subunit. This chain is Large ribosomal subunit protein bL20c, found in Lotus japonicus (Lotus corniculatus var. japonicus).